Reading from the N-terminus, the 305-residue chain is tRNA pseudouridine synthase B (305 aa).

Asp39 functions as the Nucleophile in the catalytic mechanism.

This sequence belongs to the pseudouridine synthase TruB family. Type 1 subfamily.

It catalyses the reaction uridine(55) in tRNA = pseudouridine(55) in tRNA. Its function is as follows. Responsible for synthesis of pseudouridine from uracil-55 in the psi GC loop of transfer RNAs. In Staphylococcus aureus (strain MW2), this protein is tRNA pseudouridine synthase B.